A 372-amino-acid polypeptide reads, in one-letter code: Probable inactive receptor-like protein kinase At1g65250 (372 aa).

Residues 1–4 (MGWL) and K38 each bind ATP. Residues 1 to 314 (MGWLRKKKKP…QERCQMKAFL (314 aa)) enclose the Protein kinase domain. 2 positions are modified to phosphotyrosine: Y128 and Y221. Residues 348 to 372 (SSSLSSGQTQLDSAQDISSTVVLSN) are disordered. The span at 354-372 (GQTQLDSAQDISSTVVLSN) shows a compositional bias: polar residues.

Belongs to the protein kinase superfamily.

In Arabidopsis thaliana (Mouse-ear cress), this protein is Probable inactive receptor-like protein kinase At1g65250.